The following is a 290-amino-acid chain: Elongation factor Ts (290 aa).

The interval 81 to 84 is involved in Mg(2+) ion dislocation from EF-Tu; it reads TDFV.

This sequence belongs to the EF-Ts family.

The protein localises to the cytoplasm. Its function is as follows. Associates with the EF-Tu.GDP complex and induces the exchange of GDP to GTP. It remains bound to the aminoacyl-tRNA.EF-Tu.GTP complex up to the GTP hydrolysis stage on the ribosome. In Vesicomyosocius okutanii subsp. Calyptogena okutanii (strain HA), this protein is Elongation factor Ts.